A 231-amino-acid chain; its full sequence is RING finger protein 141 (231 aa).

Gly-2 is lipidated: N-myristoyl glycine. An RING-type zinc finger spans residues 156–193 (CCICMDGRADLILPCAHSFCQKCIDKWSDRHRNCPICR).

It localises to the membrane. In terms of biological role, may be involved in spermatogenesis. This chain is RING finger protein 141 (RNF141), found in Canis lupus familiaris (Dog).